Here is a 511-residue protein sequence, read N- to C-terminus: Probable cytochrome P450 4d21 (511 aa).

A heme-binding site is contributed by Cys-456.

Belongs to the cytochrome P450 family. Requires heme as cofactor.

It localises to the endoplasmic reticulum membrane. The protein resides in the microsome membrane. Functionally, may be involved in the metabolism of insect hormones and in the breakdown of synthetic insecticides. The sequence is that of Probable cytochrome P450 4d21 (Cyp4d21) from Drosophila melanogaster (Fruit fly).